The primary structure comprises 238 residues: Peptidyl-tRNA hydrolase (238 aa).

Tyrosine 14 contributes to the tRNA binding site. Histidine 19 functions as the Proton acceptor in the catalytic mechanism. Positions 64, 66, and 112 each coordinate tRNA. A compositionally biased stretch (basic and acidic residues) spans 190 to 202 (KTEEPAPKPEKKT). The interval 190–225 (KTEEPAPKPEKKTVAKSHIHQARNHNQPRMPESGPM) is disordered. The segment covering 203-212 (VAKSHIHQAR) has biased composition (basic residues).

Belongs to the PTH family. In terms of assembly, monomer.

It is found in the cytoplasm. The enzyme catalyses an N-acyl-L-alpha-aminoacyl-tRNA + H2O = an N-acyl-L-amino acid + a tRNA + H(+). Hydrolyzes ribosome-free peptidyl-tRNAs (with 1 or more amino acids incorporated), which drop off the ribosome during protein synthesis, or as a result of ribosome stalling. In terms of biological role, catalyzes the release of premature peptidyl moieties from peptidyl-tRNA molecules trapped in stalled 50S ribosomal subunits, and thus maintains levels of free tRNAs and 50S ribosomes. The chain is Peptidyl-tRNA hydrolase from Rhizobium rhizogenes (strain K84 / ATCC BAA-868) (Agrobacterium radiobacter).